The chain runs to 207 residues: Dephospho-CoA kinase (207 aa).

The 197-residue stretch at 11–207 (RIGLTGGIAS…LLKMSPTAEL (197 aa)) folds into the DPCK domain. 19 to 24 (ASGKSS) is an ATP binding site.

The protein belongs to the CoaE family.

The protein localises to the cytoplasm. It catalyses the reaction 3'-dephospho-CoA + ATP = ADP + CoA + H(+). Its pathway is cofactor biosynthesis; coenzyme A biosynthesis; CoA from (R)-pantothenate: step 5/5. Catalyzes the phosphorylation of the 3'-hydroxyl group of dephosphocoenzyme A to form coenzyme A. This is Dephospho-CoA kinase from Synechococcus sp. (strain CC9605).